Consider the following 620-residue polypeptide: Chaperone protein HscA homolog (620 aa).

The protein belongs to the heat shock protein 70 family.

Chaperone involved in the maturation of iron-sulfur cluster-containing proteins. Has a low intrinsic ATPase activity which is markedly stimulated by HscB. The chain is Chaperone protein HscA homolog from Shewanella woodyi (strain ATCC 51908 / MS32).